The chain runs to 179 residues: Photosystem I assembly protein Ycf3 (179 aa).

TPR repeat units lie at residues 29-62, 66-99, and 126-159; these read AFSYYRAGMSAQSEGKYAEALENYYEALQLEEDP, SYTLYNIGLIYGNNGNYSQALEYYHQALELNSNL, and NLEIRNDEYLELAKEFFDKAAEYWRQALKLAPDN.

The protein belongs to the Ycf3 family.

It is found in the plastid. Its subcellular location is the chloroplast thylakoid membrane. In terms of biological role, essential for the assembly of the photosystem I (PSI) complex. May act as a chaperone-like factor to guide the assembly of the PSI subunits. The protein is Photosystem I assembly protein Ycf3 of Trieres chinensis (Marine centric diatom).